We begin with the raw amino-acid sequence, 224 residues long: tRNA (guanine-N(7)-)-methyltransferase (224 aa).

S-adenosyl-L-methionine contacts are provided by glutamate 54, glutamate 79, aspartate 106, and aspartate 129. Aspartate 129 is a catalytic residue. Substrate is bound by residues lysine 133 and aspartate 165.

Belongs to the class I-like SAM-binding methyltransferase superfamily. TrmB family.

The catalysed reaction is guanosine(46) in tRNA + S-adenosyl-L-methionine = N(7)-methylguanosine(46) in tRNA + S-adenosyl-L-homocysteine. It participates in tRNA modification; N(7)-methylguanine-tRNA biosynthesis. Catalyzes the formation of N(7)-methylguanine at position 46 (m7G46) in tRNA. The polypeptide is tRNA (guanine-N(7)-)-methyltransferase (Chlamydia felis (strain Fe/C-56) (Chlamydophila felis)).